We begin with the raw amino-acid sequence, 96 residues long: Large ribosomal subunit protein bL28 (96 aa).

The tract at residues 1–23 (MSRVCELSGKAPMTGNTVSHANN) is disordered.

The protein belongs to the bacterial ribosomal protein bL28 family.

This chain is Large ribosomal subunit protein bL28, found in Cereibacter sphaeroides (strain ATCC 17025 / ATH 2.4.3) (Rhodobacter sphaeroides).